We begin with the raw amino-acid sequence, 328 residues long: D-cysteine desulfhydrase (328 aa).

The residue at position 51 (Lys-51) is an N6-(pyridoxal phosphate)lysine.

Belongs to the ACC deaminase/D-cysteine desulfhydrase family. As to quaternary structure, homodimer. The cofactor is pyridoxal 5'-phosphate.

The catalysed reaction is D-cysteine + H2O = hydrogen sulfide + pyruvate + NH4(+) + H(+). Catalyzes the alpha,beta-elimination reaction of D-cysteine and of several D-cysteine derivatives. It could be a defense mechanism against D-cysteine. The chain is D-cysteine desulfhydrase from Escherichia coli O7:K1 (strain IAI39 / ExPEC).